Here is a 260-residue protein sequence, read N- to C-terminus: Tropinone reductase homolog At2g29330 (260 aa).

13–37 (LVTGGASGIGHAIVEELAGFGAKIH) contributes to the NADP(+) binding site. Position 146 (Ser146) interacts with substrate. Tyr159 (proton acceptor) is an active-site residue.

This sequence belongs to the short-chain dehydrogenases/reductases (SDR) family. SDR65C subfamily.

Functionally, reductase active only on small flexible lipophilic carbonyls. No activity with cyclic monoterpenes, tropinone, nitrogen-containing tropinone analogs, tropine or pseudotropine as substrate. This chain is Tropinone reductase homolog At2g29330, found in Arabidopsis thaliana (Mouse-ear cress).